Here is a 325-residue protein sequence, read N- to C-terminus: Aldo-keto reductase family 1 member D1 (325 aa).

NADP(+)-binding positions include 22 to 26 (GLGTY) and Asp52. Residue Tyr26 participates in substrate binding. Substrate-binding residues include Tyr57, Trp88, Glu119, and Tyr131. The active-site Proton donor is the Tyr57. NADP(+) is bound by residues 168-169 (SN), Gln192, and 218-223 (HSPLGT). Ser228 carries the phosphoserine modification. Trp229 is a substrate binding site. NADP(+) is bound at residue 272–282 (KSFTPERIKEN).

The protein belongs to the aldo/keto reductase family.

Its subcellular location is the cytoplasm. The catalysed reaction is 5beta-cholestan-3-one + NADP(+) = cholest-4-en-3-one + NADPH + H(+). It carries out the reaction 4,5beta-dihydrocortisone + NADP(+) = cortisone + NADPH + H(+). The enzyme catalyses cortisol + NADPH + H(+) = 5beta-dihydrocortisol + NADP(+). It catalyses the reaction corticosterone + NADPH + H(+) = 5beta-dihydrocorticosterone + NADP(+). The catalysed reaction is 7alpha,12alpha-dihydroxycholest-4-en-3-one + NADPH + H(+) = 7alpha,12alpha-dihydroxy-5beta-cholestan-3-one + NADP(+). It carries out the reaction 7alpha-hydroxycholest-4-en-3-one + NADPH + H(+) = 7alpha-hydroxy-5beta-cholestan-3-one + NADP(+). The enzyme catalyses epitestosterone + NADPH + H(+) = 5beta-dihydroepitestosterone + NADP(+). It catalyses the reaction androst-4-ene-3,17-dione + NADPH + H(+) = 5beta-androstane-3,17-dione + NADP(+). The catalysed reaction is progesterone + NADPH + H(+) = 5beta-pregnan-3,20-dione + NADP(+). It carries out the reaction 21-hydroxyprogesterone + NADPH + H(+) = 5beta-dihydrodeoxycorticosterone + NADP(+). The enzyme catalyses aldosterone + NADPH + H(+) = 5beta-dihydroaldosterone + NADP(+). It catalyses the reaction 17beta-hydroxyandrosta-1,4-dien-3-one + NADPH + H(+) = 17beta-hydroxy-5beta-androst-1-en-3-one + NADP(+). The catalysed reaction is 17beta-hydroxyestr-4-en-3-one + NADPH + H(+) = 17beta-hydroxy-5beta-estran-3-one + NADP(+). It carries out the reaction 5beta-dihydrotestosterone + NADP(+) = testosterone + NADPH + H(+). The enzyme catalyses androst-4-ene-3,11,17-trione + NADPH + H(+) = 17beta-hydroxyandrost-4-ene-3,11-dione + NADP(+). With respect to regulation, subject to inhibition by high substrate concentrations. Inhibited by testosterone concentrations above 10 uM. Inhibited by the primary and secondary bile acids chenodeoxycholic acid and ursodeoxycholic acid. Its function is as follows. Catalyzes the stereospecific NADPH-dependent reduction of the C4-C5 double bond of bile acid intermediates and steroid hormones carrying a delta(4)-3-one structure to yield an A/B cis-ring junction. This cis-configuration is crucial for bile acid biosynthesis and plays important roles in steroid metabolism. Capable of reducing a broad range of delta-(4)-3-ketosteroids from C18 (such as, 17beta-hydroxyestr-4-en-3-one) to C27 (such as, 7alpha-hydroxycholest-4-en-3-one). This chain is Aldo-keto reductase family 1 member D1 (Akr1d1), found in Mus musculus (Mouse).